We begin with the raw amino-acid sequence, 374 residues long: F-box/LRR-repeat protein 8 (374 aa).

One can recognise an F-box domain in the interval 2–48 (GELVDNLPEEVLALIFRDLPLRDLAVATRVCRAWAAAAANSTVWSDK).

In terms of assembly, directly interacts with SKP1 and CUL1. Widely expressed during embryogenesis and in adult tissues.

In terms of biological role, substrate-recognition component of the SCF (SKP1-CUL1-F-box protein)-type E3 ubiquitin ligase complex. The polypeptide is F-box/LRR-repeat protein 8 (Fbxl8) (Mus musculus (Mouse)).